The chain runs to 133 residues: Snaclec A9 (133 aa).

3 cysteine pairs are disulfide-bonded: Cys-4-Cys-15, Cys-32-Cys-131, and Cys-106-Cys-123. A C-type lectin domain is found at 11 to 132 (YEGHCYKVFN…CGQPYRFTCE (122 aa)).

This sequence belongs to the snaclec family. Heterodimer; disulfide-linked. As to expression, expressed by the venom gland.

The protein resides in the secreted. Its function is as follows. Interferes with one step of hemostasis (modulation of platelet aggregation, or coagulation cascade, for example). In Macrovipera lebetinus (Levantine viper), this protein is Snaclec A9.